A 540-amino-acid polypeptide reads, in one-letter code: Probable H/ACA ribonucleoprotein complex subunit 4 (540 aa).

A disordered region spans residues 1–24 (MTTDKKSKSKSSEKSTQEVEQVIK). Aspartate 109 serves as the catalytic Nucleophile. The PUA domain maps to 280–355 (YKRIVVKDSA…VVATIKRVIM (76 aa)). The segment at 414–540 (SPVESMNVDT…DKKEKKKSKN (127 aa)) is disordered. Residues 448-494 (KKEKKDKKEKKKDSSDDESEEEKSSKKDKKEKKEKKEKKEKKSSKDD) adopt a coiled-coil conformation. Basic residues predominate over residues 473-489 (KKDKKEKKEKKEKKEKK). 2 stretches are compositionally biased toward basic and acidic residues: residues 490 to 503 (SSKD…SKKE) and 513 to 528 (SDKD…DKKD). Positions 529–540 (KKDKKEKKKSKN) are enriched in basic residues.

Belongs to the pseudouridine synthase TruB family. In terms of assembly, component of the small nucleolar ribonucleoprotein particles containing H/ACA-type snoRNAs (H/ACA snoRNPs).

The protein resides in the nucleus. It is found in the nucleolus. It catalyses the reaction a uridine in RNA = a pseudouridine in RNA. Its function is as follows. Plays a central role in ribosomal RNA processing. Probable catalytic subunit of H/ACA small nucleolar ribonucleoprotein (H/ACA snoRNP) complex, which catalyzes pseudouridylation of rRNA. This involves the isomerization of uridine such that the ribose is subsequently attached to C5, instead of the normal N1. Pseudouridine ('psi') residues may serve to stabilize the conformation of rRNAs. This is Probable H/ACA ribonucleoprotein complex subunit 4 (nola4) from Dictyostelium discoideum (Social amoeba).